The following is a 242-amino-acid chain: DNA repair protein RecO (242 aa).

The protein belongs to the RecO family.

Its function is as follows. Involved in DNA repair and RecF pathway recombination. The sequence is that of DNA repair protein RecO from Wolbachia pipientis subsp. Culex pipiens (strain wPip).